A 293-amino-acid polypeptide reads, in one-letter code: Probable 2-(5''-triphosphoribosyl)-3'-dephosphocoenzyme-A synthase (293 aa).

Belongs to the CitG/MdcB family.

It carries out the reaction 3'-dephospho-CoA + ATP = 2'-(5''-triphospho-alpha-D-ribosyl)-3'-dephospho-CoA + adenine. Involved in the formation of 2-(5''-phosphoribosyl)-3'-dephosphocoenzyme-A, the prosthetic group of the acyl-carrier protein of the malonate decarboxylase. This Pseudomonas paraeruginosa (strain DSM 24068 / PA7) (Pseudomonas aeruginosa (strain PA7)) protein is Probable 2-(5''-triphosphoribosyl)-3'-dephosphocoenzyme-A synthase.